The sequence spans 340 residues: Selenide, water dikinase (340 aa).

Sec-17 is an active-site residue. Position 17 (Sec-17) is a non-standard amino acid, selenocysteine. Residues Lys-20 and 45–47 (NNE) contribute to the ATP site. Asp-48 serves as a coordination point for Mg(2+). Residues Asp-65, Asp-88, and 136–138 (GHT) each bind ATP. Asp-88 contacts Mg(2+). Asp-224 is a binding site for Mg(2+).

Belongs to the selenophosphate synthase 1 family. Class I subfamily. In terms of assembly, homodimer. It depends on Mg(2+) as a cofactor.

The enzyme catalyses hydrogenselenide + ATP + H2O = selenophosphate + AMP + phosphate + 2 H(+). Synthesizes selenophosphate from selenide and ATP. The chain is Selenide, water dikinase from Campylobacter jejuni subsp. jejuni serotype O:2 (strain ATCC 700819 / NCTC 11168).